A 537-amino-acid polypeptide reads, in one-letter code: Mitochondria-eating protein (537 aa).

The segment at 1–270 is interaction with YWHAG/14-3-3 protein gamma; the sequence is MAESLKKLAK…SHSRSRSHSR (270 aa). A phosphoserine mark is found at serine 13, serine 85, serine 123, serine 127, serine 154, and serine 157. Residues 109 to 150 are disordered; it reads SKNRDNSPDQDQHQSDNESFSETQPTQVQDDLAESGKSLEGA. Residues 110 to 124 are compositionally biased toward basic and acidic residues; it reads KNRDNSPDQDQHQSD. Polar residues predominate over residues 125–137; that stretch reads NESFSETQPTQVQ. 2 coiled-coil regions span residues 152-184 and 210-243; these read NGST…ARHK and QDVV…RSAR. 2 disordered regions span residues 171 to 212 and 233 to 291; these read QLKS…PQDV and EKSG…RAKM. Positions 179-209 are enriched in basic and acidic residues; sequence EDARHKTSENRRSEALKSDHRSTKRTQDQRP. Low complexity predominate over residues 239–251; the sequence is GRSARSPSPSTGT. Residues 252 to 269 show a composition bias toward basic residues; sequence RSHRRGRSRSHSRSRSHS. 3 positions are modified to phosphoserine: serine 283, serine 285, and serine 508.

The protein belongs to the MIEAP family. In terms of assembly, interacts (via coiled-coil domains) with BNIP3L (via BH3 domain). Interacts (via coiled-coil domains) with BNIP3 (via BH3 domain). Interacts with YWHAG/14-3-3 protein gamma; a protein that also plays a role in MALM. In terms of tissue distribution, in testis, expressed primarily in spermatids.

It localises to the cytoplasm. Its subcellular location is the cytosol. The protein resides in the mitochondrion outer membrane. It is found in the mitochondrion matrix. In terms of biological role, key regulator of mitochondrial quality that mediates the repairing or degradation of unhealthy mitochondria in response to mitochondrial damage. Mediator of mitochondrial protein catabolic process (also named MALM) by mediating the degradation of damaged proteins inside mitochondria by promoting the accumulation in the mitochondrial matrix of hydrolases that are characteristic of the lysosomal lumen. Also involved in mitochondrion degradation of damaged mitochondria by promoting the formation of vacuole-like structures (named MIV), which engulf and degrade unhealthy mitochondria by accumulating lysosomes. The physical interaction of SPATA18/MIEAP, BNIP3 and BNIP3L/NIX at the mitochondrial outer membrane regulates the opening of a pore in the mitochondrial double membrane in order to mediate the translocation of lysosomal proteins from the cytoplasm to the mitochondrial matrix. Binds cardiolipin. May form molecular condensates (non-membrane-bounded organelles) within mitochondria that compartmentalize and promote cardiolipin metabolism. In Mus musculus (Mouse), this protein is Mitochondria-eating protein (Spata18).